The following is an 887-amino-acid chain: Oxysterol-binding protein-related protein 3 (887 aa).

Residues 1 to 35 (MMSDEKNLGVSQKLVSPSRSTSSCSSKQGSRQDSW) are disordered. Residues S16 and S34 each carry the phosphoserine modification. Residues 16 to 32 (SPSRSTSSCSSKQGSRQ) are compositionally biased toward low complexity. The 96-residue stretch at 51 to 146 (PPVQKGFLLK…WVSKLRHHRM (96 aa)) folds into the PH domain. The FFAT 1 motif lies at 161–167 (HFFSGST). S200, S251, and S265 each carry phosphoserine. Positions 261-326 (GSFESPKKEK…KNYSDGSETS (66 aa)) are disordered. The segment covering 268-280 (KEKRSHRRWRSRA) has biased composition (basic residues). Phosphoserine is present on residues S304, S309, S320, S323, S371, S372, S410, S425, S437, and S440. The FFAT 2 signature appears at 450–454 (EFFDA).

The protein belongs to the OSBP family. In terms of assembly, homodimer. Interacts with RRAS. Interacts (phosphorylated form) with VAPA. Interacts with OSBPL6. In terms of processing, phosphorylation is enhanced in vitro by phorbol-12-myristate-13-acetate (PMA), forskolin and calcium ionophore A23187. Phosphorylation seems to be stimulated in conditions of low cell-cell (or cell-matrix) adhesion. As to expression, expressed in a subset of small lymphocytes (at protein level). Expressed at high concentration in kidney, lymph node and thymus. Expressed at moderate concentration in stomach, jejunum, ileum, appendix, spleen, leukocytes, trachea, lung and thyroid gland. Expressed at low concentration in whole brain, esophagus, duodenum, ileocecum, colon, skeletal muscle, bone marrow, placenta and mammary gland. Isoform 1a, isoform 1b, isoform 1c and isoform 1d are highly expressed in brain, bone marrow, colon, kidney, lung, skeletal muscle, spleen, thymus and thyroid. Not expressed in heart and liver. Isoform 2a, isoform 2b, isoform 2c and isoform 2d are expressed in brain, bone marrow, kidney, skeletal muscle, spleen, thymus and thyroid. Not expressed in heart, liver and lung.

It localises to the endoplasmic reticulum membrane. The protein resides in the cytoplasm. The protein localises to the cytosol. Its subcellular location is the cell membrane. It is found in the cell projection. It localises to the filopodium tip. The protein resides in the nucleus membrane. Its function is as follows. Phosphoinositide-binding protein which associates with both cell and endoplasmic reticulum (ER) membranes. Can bind to the ER membrane protein VAPA and recruit VAPA to plasma membrane sites, thus linking these intracellular compartments. The ORP3-VAPA complex stimulates RRAS signaling which in turn attenuates integrin beta-1 (ITGB1) activation at the cell surface. With VAPA, may regulate ER morphology. Has a role in regulation of the actin cytoskeleton, cell polarity and cell adhesion. Binds to phosphoinositides with preference for PI(3,4)P2 and PI(3,4,5)P3. Also binds 25-hydroxycholesterol and cholesterol. This Homo sapiens (Human) protein is Oxysterol-binding protein-related protein 3 (OSBPL3).